Here is a 123-residue protein sequence, read N- to C-terminus: EVKLVESGGGLVQPGGSLRLSCATSGFTLSDFYMEWVRQTPGKRLEWIAASRNKVYDYTTEYSASVKGRFIVSRDTSQSILYLQMNALRAEDTAIYYCARDAYYGSYWYFDVWGAGTTVTVSS.

One can recognise an Ig-like domain in the interval 1–114; sequence EVKLVESGGG…GSYWYFDVWG (114 aa).

This chain is Ig heavy chain V region HPCG13, found in Mus musculus (Mouse).